The following is a 268-amino-acid chain: Undecaprenyl-diphosphatase (268 aa).

7 helical membrane passes run 42–62, 86–106, 108–128, 158–178, 184–204, 218–238, and 246–266; these read VPGK…ICVL, AIFV…DFIL, VLFT…AIVV, IALV…LLVG, AAEF…VVSL, LIAA…KWLV, and FTVF…YFSL.

The protein belongs to the UppP family.

The protein localises to the cell inner membrane. It catalyses the reaction di-trans,octa-cis-undecaprenyl diphosphate + H2O = di-trans,octa-cis-undecaprenyl phosphate + phosphate + H(+). In terms of biological role, catalyzes the dephosphorylation of undecaprenyl diphosphate (UPP). Confers resistance to bacitracin. The sequence is that of Undecaprenyl-diphosphatase from Parvibaculum lavamentivorans (strain DS-1 / DSM 13023 / NCIMB 13966).